Consider the following 213-residue polypeptide: Protein GrpE (213 aa).

Over residues 1–23 (MSDEKKPEAETSESLQKREEKLA) the composition is skewed to basic and acidic residues. The disordered stretch occupies residues 1-43 (MSDEKKPEAETSESLQKREEKLAETLASEPAAQGEAEDAAAAG). The span at 29 to 43 (EPAAQGEAEDAAAAG) shows a compositional bias: low complexity.

The protein belongs to the GrpE family. Homodimer.

The protein localises to the cytoplasm. Participates actively in the response to hyperosmotic and heat shock by preventing the aggregation of stress-denatured proteins, in association with DnaK and GrpE. It is the nucleotide exchange factor for DnaK and may function as a thermosensor. Unfolded proteins bind initially to DnaJ; upon interaction with the DnaJ-bound protein, DnaK hydrolyzes its bound ATP, resulting in the formation of a stable complex. GrpE releases ADP from DnaK; ATP binding to DnaK triggers the release of the substrate protein, thus completing the reaction cycle. Several rounds of ATP-dependent interactions between DnaJ, DnaK and GrpE are required for fully efficient folding. The chain is Protein GrpE from Parvibaculum lavamentivorans (strain DS-1 / DSM 13023 / NCIMB 13966).